The sequence spans 402 residues: Multidrug resistance protein MdtH (402 aa).

The next 11 membrane-spanning stretches (helical) occupy residues 13-33 (YFLL…FPLI), 34-54 (SIRF…ALGL), 99-116 (PWVL…GTLF), 139-159 (LLMM…SWLL), 165-185 (LVCS…AWYL), 214-234 (VLTL…LPIM), 243-263 (AAVK…LYPI), 277-297 (LMAG…TSSL), 300-320 (LFTL…ARET), 340-360 (LGLA…FDAG), and 368-388 (LPWL…WWQF).

It belongs to the major facilitator superfamily. DHA1 family. MdtH (TC 2.A.1.2.21) subfamily.

The protein localises to the cell inner membrane. The polypeptide is Multidrug resistance protein MdtH (Klebsiella pneumoniae (strain 342)).